A 726-amino-acid polypeptide reads, in one-letter code: Catalase-peroxidase (726 aa).

The N-terminal stretch at 1–16 (MDNPTDSAGKCPVAHG) is a signal peptide. Positions 1 to 26 (MDNPTDSAGKCPVAHGNTPRSRSNRD) are disordered. A cross-link (tryptophyl-tyrosyl-methioninium (Trp-Tyr) (with M-244)) is located at residues 96–218 (WHSAGTYRIT…LGAVQMGLIY (123 aa)). Catalysis depends on histidine 97, which acts as the Proton acceptor. The segment at residues 218–244 (YVNPEGPNGTPDPLASARDIRETFARM) is a cross-link (tryptophyl-tyrosyl-methioninium (Tyr-Met) (with W-96)). Heme b is bound at residue histidine 259.

The protein belongs to the peroxidase family. Peroxidase/catalase subfamily. Homodimer or homotetramer. The cofactor is heme b. In terms of processing, formation of the three residue Trp-Tyr-Met cross-link is important for the catalase, but not the peroxidase activity of the enzyme.

It catalyses the reaction H2O2 + AH2 = A + 2 H2O. The catalysed reaction is 2 H2O2 = O2 + 2 H2O. Its function is as follows. Bifunctional enzyme with both catalase and broad-spectrum peroxidase activity. The sequence is that of Catalase-peroxidase from Rhizobium johnstonii (strain DSM 114642 / LMG 32736 / 3841) (Rhizobium leguminosarum bv. viciae).